The sequence spans 177 residues: Large ribosomal subunit protein uL6 (177 aa).

It belongs to the universal ribosomal protein uL6 family. Part of the 50S ribosomal subunit.

In terms of biological role, this protein binds to the 23S rRNA, and is important in its secondary structure. It is located near the subunit interface in the base of the L7/L12 stalk, and near the tRNA binding site of the peptidyltransferase center. The polypeptide is Large ribosomal subunit protein uL6 (Paracidovorax citrulli (strain AAC00-1) (Acidovorax citrulli)).